Reading from the N-terminus, the 42-residue chain is Potassium channel toxin gamma-KTx 1.6 (42 aa).

4 disulfide bridges follow: Cys-5–Cys-23, Cys-11–Cys-34, Cys-20–Cys-39, and Cys-24–Cys-41.

It belongs to the ergtoxin family. Gamma-KTx 1 subfamily. As to expression, expressed by the venom gland.

The protein localises to the secreted. Its function is as follows. Blocks Kv11/ERG potassium channels. This Centruroides exilicauda (Bark scorpion) protein is Potassium channel toxin gamma-KTx 1.6.